Consider the following 65-residue polypeptide: Antimicrobial peptide THP1 (65 aa).

The N-terminal stretch at 1–25 (MRIVYLLFPFILLLAQGAAGSSLAL) is a signal peptide. 3 cysteine pairs are disulfide-bonded: Cys31–Cys53, Cys38–Cys59, and Cys43–Cys60. Positions 61–65 (KTLLG) are excised as a propeptide.

Belongs to the beta-defensin family.

The protein resides in the secreted. Functionally, bactericidal activity; inhibits S.aureus and E.coli. The protein is Antimicrobial peptide THP1 of Meleagris gallopavo (Wild turkey).